Reading from the N-terminus, the 77-residue chain is Conotoxin Cl6.12 (77 aa).

A signal peptide spans 1 to 20 (MKFYLLLTAALLLTAVIIEA). Residues 21–36 (APTDHQDEARDLMREE) constitute a propeptide that is removed on maturation. 3 disulfides stabilise this stretch: cysteine 43-cysteine 58, cysteine 51-cysteine 62, and cysteine 57-cysteine 68.

Expressed by the venom duct.

It localises to the secreted. The chain is Conotoxin Cl6.12 from Californiconus californicus (California cone).